Here is a 198-residue protein sequence, read N- to C-terminus: Holliday junction branch migration complex subunit RuvA (198 aa).

The domain I stretch occupies residues 1-64; that stretch reads MIAHLRGTLL…EDAIALFGFL (64 aa). Positions 65–141 are domain II; the sequence is DREEKRLFER…LDDLIAAAPA (77 aa). A flexible linker region spans residues 141 to 145; sequence AAGPV. The interval 146-198 is domain III; it reads AAGPAAEDVLSALLNLGYQRPAALKAIETAVEKDAAAGEDFDLLFRAALKLIR.

This sequence belongs to the RuvA family. Homotetramer. Forms an RuvA(8)-RuvB(12)-Holliday junction (HJ) complex. HJ DNA is sandwiched between 2 RuvA tetramers; dsDNA enters through RuvA and exits via RuvB. An RuvB hexamer assembles on each DNA strand where it exits the tetramer. Each RuvB hexamer is contacted by two RuvA subunits (via domain III) on 2 adjacent RuvB subunits; this complex drives branch migration. In the full resolvosome a probable DNA-RuvA(4)-RuvB(12)-RuvC(2) complex forms which resolves the HJ.

The protein localises to the cytoplasm. The RuvA-RuvB-RuvC complex processes Holliday junction (HJ) DNA during genetic recombination and DNA repair, while the RuvA-RuvB complex plays an important role in the rescue of blocked DNA replication forks via replication fork reversal (RFR). RuvA specifically binds to HJ cruciform DNA, conferring on it an open structure. The RuvB hexamer acts as an ATP-dependent pump, pulling dsDNA into and through the RuvAB complex. HJ branch migration allows RuvC to scan DNA until it finds its consensus sequence, where it cleaves and resolves the cruciform DNA. This chain is Holliday junction branch migration complex subunit RuvA, found in Acidobacterium capsulatum (strain ATCC 51196 / DSM 11244 / BCRC 80197 / JCM 7670 / NBRC 15755 / NCIMB 13165 / 161).